A 768-amino-acid polypeptide reads, in one-letter code: Putative calcium up-regulated protein H (768 aa).

The interval 1-22 is disordered; that stretch reads MINIEDISKSSNQSEEKQLKST. Ricin B-type lectin domains are found at residues 25–145 and 116–248; these read KPKY…WTTF and QGNG…WGIN.

Belongs to the cup family.

The protein localises to the cytoplasm. It is found in the membrane. Functionally, may play an important role in stabilizing and/or regulating the cell membrane during Ca(2+) stress or certain stages of development. The chain is Putative calcium up-regulated protein H (cupH) from Dictyostelium discoideum (Social amoeba).